We begin with the raw amino-acid sequence, 253 residues long: DNA repair protein RecO (253 aa).

This sequence belongs to the RecO family.

Its function is as follows. Involved in DNA repair and RecF pathway recombination. The polypeptide is DNA repair protein RecO (Symbiobacterium thermophilum (strain DSM 24528 / JCM 14929 / IAM 14863 / T)).